A 463-amino-acid polypeptide reads, in one-letter code: MKFPESLKGLKILVLGGGISGNSALNFLISEKAQPILCDRNQPERTVVPFFPDNIPPQSLPEVSLVIKSPGILPTHPILSYAADKKIPVVSEIDLGRYFFKGKIIGITGTDGKSTTTSLIAHLLKESFPDLKEGGNLGIPFTSFCKESISLAVLELSSYQLEDSSPLHLDVSVFLNLASDHLERHKTMENYFQAKLKIADLSNSNHTLIVSEKIKERILNSISYQCKLLSFGKTSDSNAFLDENSLKIKTSKFVYDISKFYLPGTHNRENLAASILAAEEIGGKPESIQTRIPLFRGLPHRFQIAGEKLGISFINDSKSTNLHSMLAGMATWKNIDQTCLILGGRPKQEDLKPLYNFLIKGIGCVVLFGEARATWESGIKNIIGEKLYCVENLNDTFEIFKKGNIFPVPGLNKDIIIRLSDSISISSFVFSPACASFDQYKNFEERGNHFLSLVNDFLDQIDS.

109-115 (GTDGKST) contributes to the ATP binding site.

This sequence belongs to the MurCDEF family.

It is found in the cytoplasm. It catalyses the reaction UDP-N-acetyl-alpha-D-muramoyl-L-alanine + D-glutamate + ATP = UDP-N-acetyl-alpha-D-muramoyl-L-alanyl-D-glutamate + ADP + phosphate + H(+). It functions in the pathway cell wall biogenesis; peptidoglycan biosynthesis. In terms of biological role, cell wall formation. Catalyzes the addition of glutamate to the nucleotide precursor UDP-N-acetylmuramoyl-L-alanine (UMA). The protein is UDP-N-acetylmuramoylalanine--D-glutamate ligase of Leptospira interrogans serogroup Icterohaemorrhagiae serovar copenhageni (strain Fiocruz L1-130).